Here is a 465-residue protein sequence, read N- to C-terminus: MSQGKIVQIIGAVVDVEFPRDMIPRVYDALKLDENGLTLEVQQLLGDGVVRAIAMGSSDGLKRGMTVSNTGAPITVPVGKGTLGRIVDVLGTPVDEAGPIDTDKSRAIHQAAPKFDELSSTTELLETGIKVIDLLCPFAKGGKVGLFGGAGVGKTVNMMELINNIAKAHSGLSVFAGVGERTREGNDFYHEMKDSNVLDKVAMVYGQMNEPPGNRLRVALTGLTMAEYFRDEKDENGKGRDVLFFVDNIYRYTLAGTEVSALLGRMPSAVGYQPTLAEEMGRLQERITSTQTGSITSIQAVYVPADDLTDPSPATTFAHLDATVVLSRDIASLGIYPAVDPLDSTSRQLDPMVLGQEHYDVARGVQSTLQKYKELRDIIAILGMDELSDEDKLTVMRARKIQRFLSQPFHVAEVFTGSPGKYVALRDTIAGFKAILNGEYDHLPEQAFYMVGSIEEAVEKAKTLN.

148–155 contacts ATP; sequence GGAGVGKT.

The protein belongs to the ATPase alpha/beta chains family. F-type ATPases have 2 components, CF(1) - the catalytic core - and CF(0) - the membrane proton channel. CF(1) has five subunits: alpha(3), beta(3), gamma(1), delta(1), epsilon(1). CF(0) has three main subunits: a(1), b(2) and c(9-12). The alpha and beta chains form an alternating ring which encloses part of the gamma chain. CF(1) is attached to CF(0) by a central stalk formed by the gamma and epsilon chains, while a peripheral stalk is formed by the delta and b chains.

The protein localises to the cell inner membrane. The catalysed reaction is ATP + H2O + 4 H(+)(in) = ADP + phosphate + 5 H(+)(out). Produces ATP from ADP in the presence of a proton gradient across the membrane. The catalytic sites are hosted primarily by the beta subunits. The protein is ATP synthase subunit beta of Neisseria meningitidis serogroup B (strain ATCC BAA-335 / MC58).